A 70-amino-acid chain; its full sequence is Putative ankyrin repeat protein RC0502 (70 aa).

One copy of the ANK repeat lies at 9–43 (KGRIPIHYATYSKQHEITQILILLQPGSEIDTVDN).

In Rickettsia conorii (strain ATCC VR-613 / Malish 7), this protein is Putative ankyrin repeat protein RC0502.